Consider the following 312-residue polypeptide: DNA-directed RNA polymerase subunit alpha (312 aa).

The segment at 1-229 (MLQYQIDRID…ELFQPLATVT (229 aa)) is alpha N-terminal domain (alpha-NTD). The tract at residues 241 to 312 (SPEAQIPLEE…ISIPQSRTSV (72 aa)) is alpha C-terminal domain (alpha-CTD).

It belongs to the RNA polymerase alpha chain family. In terms of assembly, in cyanobacteria the RNAP catalytic core is composed of 2 alpha, 1 beta, 1 beta', 1 gamma and 1 omega subunit. When a sigma factor is associated with the core the holoenzyme is formed, which can initiate transcription.

The enzyme catalyses RNA(n) + a ribonucleoside 5'-triphosphate = RNA(n+1) + diphosphate. Functionally, DNA-dependent RNA polymerase catalyzes the transcription of DNA into RNA using the four ribonucleoside triphosphates as substrates. The polypeptide is DNA-directed RNA polymerase subunit alpha (Prochlorococcus marinus (strain MIT 9215)).